Reading from the N-terminus, the 780-residue chain is Lethal(3)malignant brain tumor-like protein 3 (780 aa).

Residues 1-64 form an interaction with RBPJ. Required for transcription repressor activity on Notch target genes region; the sequence is MTESASSTSG…VKKATATTTW (64 aa). The interval 149-220 is disordered; it reads DKDQKEERDV…RKRRGDSAVL (72 aa). Composition is skewed to acidic residues over residues 157 to 166 and 185 to 194; these read DVEEDNEEED and EDGEERDDEM. 3 MBT repeats span residues 232–332, 340–439, and 448–543; these read WCWA…LHPP, FNWQ…LITP, and FSWD…LQPP. Residues 549-593 form a CCHHC-type; degenerate zinc finger; the sequence is LMEASEHGGCSTPGCKGIGHFKRARHLGPHSAANCPYSEINLNKD. Residues 597–665 form a disordered region; sequence PDRLSGEMPP…GAREEPTVQQ (69 aa). Positions 600 to 710 are interaction with DCAF5; it reads LSGEMPPASP…PASKVSKWST (111 aa). Ser608 carries the phosphoserine modification. Residue Lys637 forms a Glycyl lysine isopeptide (Lys-Gly) (interchain with G-Cter in SUMO2) linkage. Residues 643–661 show a composition bias toward basic and acidic residues; it reads RTESEMRTSHEARGAREEP. Lys704 participates in a covalent cross-link: Glycyl lysine isopeptide (Lys-Gly) (interchain with G-Cter in SUMO2). The 65-residue stretch at 708–772 folds into the SAM domain; the sequence is WSTDEVSEFI…FNSILMFKAA (65 aa).

As to quaternary structure, interacts with RNF2. Interacts (via SAM domain) with SAMD1 (via SAM domain); the interaction mediates L3MBTL3 binding to chromatin. Interacts with RBPJ; the interaction is required for L3MBTL3 localization to chromatin and is impaired by Notch-derived peptides containing the intracellular domain (NICD). Interacts (via SAM domain) with KDM1A. Interacts with DCAF5. Interacts with DNMT1. Interacts with E2F1. Interacts with SOX2. Interacts with SFMBT1.

The protein localises to the nucleus. Is a negative regulator of Notch target genes expression, required for RBPJ-mediated transcriptional repression. It recruits KDM1A to Notch-responsive elements and promotes KDM1A-mediated H3K4me demethylation. Involved in the regulation of ubiquitin-dependent degradation of a set of methylated non-histone proteins, including SOX2, DNMT1 and E2F1. It acts as an adapter recruiting the CRL4-DCAF5 E3 ubiquitin ligase complex to methylated target proteins. Required for normal maturation of myeloid progenitor cells. In Homo sapiens (Human), this protein is Lethal(3)malignant brain tumor-like protein 3.